Here is a 380-residue protein sequence, read N- to C-terminus: cAMP-dependent protein kinase type I-alpha regulatory subunit (380 aa).

Methionine 1 is modified (N-acetylmethionine). Alanine 2 carries the post-translational modification N-acetylalanine; in cAMP-dependent protein kinase type I-alpha regulatory subunit, N-terminally processed. Residues 2-135 are dimerization and phosphorylation; that stretch reads ASGTTASEEE…ALAKAIEKNV (134 aa). Phosphoserine occurs at positions 3, 76, and 82. A disordered region spans residues 64 to 96; the sequence is IQNLQKAGSRADSREDEISPPPPNPVVKGRRRR. Positions 95–99 match the Pseudophosphorylation motif motif; the sequence is RRGAI. At serine 100 the chain carries Phosphoserine. 3',5'-cyclic AMP is bound by residues 136 to 253, glutamate 201, arginine 210, 254 to 380, glutamate 325, and arginine 334; these read LFSH…SKVS and ILES…SLSV. Serine 257 is subject to Phosphoserine.

The protein belongs to the cAMP-dependent kinase regulatory chain family. As to quaternary structure, the inactive holoenzyme is composed of two regulatory chains and two catalytic chains. Activation by cAMP releases the two active catalytic monomers and the regulatory dimer. Interacts with PRKACA and PRKACB. PRKAR1A also interacts with RFC2; the complex may be involved in cell survival. Interacts with AKAP4. Interacts with RARA; the interaction occurs in the presence of cAMP or FSH and regulates RARA transcriptional activity. Interacts with the phosphorylated form of PJA2. Interacts with CBFA2T3. Interacts with PRKX; regulates this cAMP-dependent protein kinase. Interacts with smAKAP; this interaction may target PRKAR1A to the plasma membrane. Interacts with AICDA. The pseudophosphorylation site binds to the substrate-binding region of the catalytic chain, resulting in the inhibition of its activity. The physiological significance of the in vitro phosphorylation of a proximal serine is unclear. In terms of tissue distribution, four types of regulatory chains are found: I-alpha, I-beta, II-alpha, and II-beta. Their expression varies among tissues and is in some cases constitutive and in others inducible.

The protein localises to the cell membrane. In terms of biological role, regulatory subunit of the cAMP-dependent protein kinases involved in cAMP signaling in cells. The polypeptide is cAMP-dependent protein kinase type I-alpha regulatory subunit (PRKAR1A) (Bos taurus (Bovine)).